Reading from the N-terminus, the 565-residue chain is NAD-dependent malic enzyme (565 aa).

The active-site Proton donor is Tyr104. Arg157 serves as a coordination point for NAD(+). Residue Lys175 is the Proton acceptor of the active site. The a divalent metal cation site is built by Glu246, Asp247, and Asp270. 2 residues coordinate NAD(+): Asp270 and Asn418.

The protein belongs to the malic enzymes family. In terms of assembly, homotetramer. The cofactor is Mg(2+). Mn(2+) is required as a cofactor.

The enzyme catalyses (S)-malate + NAD(+) = pyruvate + CO2 + NADH. It catalyses the reaction oxaloacetate + H(+) = pyruvate + CO2. This chain is NAD-dependent malic enzyme, found in Photorhabdus laumondii subsp. laumondii (strain DSM 15139 / CIP 105565 / TT01) (Photorhabdus luminescens subsp. laumondii).